The primary structure comprises 202 residues: Small ribosomal subunit protein uS4 (202 aa).

An S4 RNA-binding domain is found at 91–157; that stretch reads CRLDNVVYRA…TPFIVARETH (67 aa).

Belongs to the universal ribosomal protein uS4 family. As to quaternary structure, part of the 30S ribosomal subunit. Contacts protein S5. The interaction surface between S4 and S5 is involved in control of translational fidelity.

Functionally, one of the primary rRNA binding proteins, it binds directly to 16S rRNA where it nucleates assembly of the body of the 30S subunit. In terms of biological role, with S5 and S12 plays an important role in translational accuracy. The protein is Small ribosomal subunit protein uS4 of Nocardioides sp. (strain ATCC BAA-499 / JS614).